A 1035-amino-acid polypeptide reads, in one-letter code: Isoleucine--tRNA ligase (1035 aa).

The 'HIGH' region motif lies at P48–H58. The 'KMSKS' region signature appears at K589 to H593. K592 lines the ATP pocket.

It belongs to the class-I aminoacyl-tRNA synthetase family. IleS type 2 subfamily. Monomer. It depends on Zn(2+) as a cofactor.

The protein resides in the cytoplasm. The catalysed reaction is tRNA(Ile) + L-isoleucine + ATP = L-isoleucyl-tRNA(Ile) + AMP + diphosphate. Its function is as follows. Catalyzes the attachment of isoleucine to tRNA(Ile). As IleRS can inadvertently accommodate and process structurally similar amino acids such as valine, to avoid such errors it has two additional distinct tRNA(Ile)-dependent editing activities. One activity is designated as 'pretransfer' editing and involves the hydrolysis of activated Val-AMP. The other activity is designated 'posttransfer' editing and involves deacylation of mischarged Val-tRNA(Ile). The chain is Isoleucine--tRNA ligase from Clostridium acetobutylicum (strain ATCC 824 / DSM 792 / JCM 1419 / IAM 19013 / LMG 5710 / NBRC 13948 / NRRL B-527 / VKM B-1787 / 2291 / W).